A 290-amino-acid chain; its full sequence is Membrane-spanning 4-domains subfamily A member 8 (290 aa).

A compositionally biased stretch (polar residues) spans 1-21 (MNRPTAQGAVNLSGSKFSTAK). The interval 1-25 (MNRPTAQGAVNLSGSKFSTAKSWEP) is disordered. At 1-108 (MNRPTAQGAV…PAQRVLKKGQ (108 aa)) the chain is on the cytoplasmic side. A helical transmembrane segment spans residues 109–129 (VLGAIQILIGLVHIGLGSIMI). Residues 130 to 138 (TNLFSHYTP) are Extracellular-facing. The chain crosses the membrane as a helical span at residues 139 to 159 (VSLYGGFPFWGGIWFIISGSL). Over 160-174 (SVAAETQPNSPCLLN) the chain is Cytoplasmic. A helical transmembrane segment spans residues 175-195 (GSVGLNIFSAICSAVGIMLFI). Topologically, residues 196–220 (TDISISSGYIYPSYYPYQENLGVRT) are extracellular. A helical transmembrane segment spans residues 221–241 (GVAISSVLLIFCLLELSIASV). The Cytoplasmic segment spans residues 242 to 290 (SSHFGCQVACCHYNNPGVVIPNVYAANPVVIPEPPNPIPSYSEVVQDSR).

Belongs to the MS4A family. Expressed strongly in intestine and colon and minimally in lung and ovary.

Its subcellular location is the membrane. May be involved in signal transduction as a component of a multimeric receptor complex. The chain is Membrane-spanning 4-domains subfamily A member 8 (Ms4a8) from Mus musculus (Mouse).